The following is a 285-amino-acid chain: Golgi phosphoprotein 3-like (285 aa).

A disordered region spans residues 1 to 43 (MTTLTHRTRRTEVSKSCEKKIESEEDTNQERSPDNEDPGDSKD). A compositionally biased stretch (basic and acidic residues) spans 10–43 (RTEVSKSCEKKIESEEDTNQERSPDNEDPGDSKD). A 1,2-diacyl-sn-glycero-3-phospho-(1D-myo-inositol 4-phosphate) contacts are provided by W67 and R76. The residue at position 112 (S112) is a Phosphoserine. Residues R157 and R160 each contribute to the a 1,2-diacyl-sn-glycero-3-phospho-(1D-myo-inositol 4-phosphate) site. The interval 176–187 (EKQNFLLFDMTT) is beta-hairpin required for oligomerization.

The protein belongs to the GOLPH3/VPS74 family. Homooligomer. Does not interact MYO18; differs from GOLPH3 by its inability to interact with MYO18. May interact with ARF1.

It localises to the golgi apparatus. The protein resides in the golgi stack membrane. Its subcellular location is the trans-Golgi network membrane. Phosphatidylinositol-4-phosphate-binding protein that may antagonize the action of GOLPH3 which is required for the process of vesicle budding at the Golgi and anterograde transport to the plasma membrane. The polypeptide is Golgi phosphoprotein 3-like (Golph3l) (Rattus norvegicus (Rat)).